The primary structure comprises 513 residues: Pantetheinase (513 aa).

A signal peptide spans 1-21; the sequence is MTTQLPAYVAILLFYVSRASC. The N-linked (GlcNAc...) asparagine glycan is linked to Asn-38. A CN hydrolase domain is found at 39–306; that stretch reads ATLTPVSREE…GKLLLSQLDS (268 aa). Residue Glu-79 is the Proton acceptor of the active site. N-linked (GlcNAc...) asparagine glycosylation is present at Asn-130. Lys-178 serves as the catalytic Proton donor. N-linked (GlcNAc...) asparagine glycosylation occurs at Asn-200. Cys-211 (nucleophile) is an active-site residue. Asn-283, Asn-315, and Asn-353 each carry an N-linked (GlcNAc...) asparagine glycan. The GPI-anchor amidated glycine moiety is linked to residue Gly-491. A propeptide spans 492–513 (removed in mature form); the sequence is LTAQARIIMLIVIAPIVCSLSW.

This sequence belongs to the carbon-nitrogen hydrolase superfamily. BTD/VNN family. Monomer. As to expression, widely expressed with higher expression in spleen, kidney and blood. Overexpressed in lesional psoriatic skin.

The protein localises to the cell membrane. The catalysed reaction is (R)-pantetheine + H2O = cysteamine + (R)-pantothenate. Amidohydrolase that hydrolyzes specifically one of the carboamide linkages in D-pantetheine thus recycling pantothenic acid (vitamin B5) and releasing cysteamine. In Homo sapiens (Human), this protein is Pantetheinase (VNN1).